Here is a 188-residue protein sequence, read N- to C-terminus: Elongation factor P-like protein (188 aa).

It belongs to the elongation factor P family.

The protein is Elongation factor P-like protein of Xanthomonas campestris pv. campestris (strain 8004).